Here is a 77-residue protein sequence, read N- to C-terminus: Exodeoxyribonuclease 7 small subunit (77 aa).

It belongs to the XseB family. As to quaternary structure, heterooligomer composed of large and small subunits.

The protein resides in the cytoplasm. The enzyme catalyses Exonucleolytic cleavage in either 5'- to 3'- or 3'- to 5'-direction to yield nucleoside 5'-phosphates.. Its function is as follows. Bidirectionally degrades single-stranded DNA into large acid-insoluble oligonucleotides, which are then degraded further into small acid-soluble oligonucleotides. The protein is Exodeoxyribonuclease 7 small subunit of Lysinibacillus sphaericus (strain C3-41).